We begin with the raw amino-acid sequence, 72 residues long: DNA-directed RNA polymerase subunit omega (72 aa).

Belongs to the RNA polymerase subunit omega family. In terms of assembly, the RNAP catalytic core consists of 2 alpha, 1 beta, 1 beta' and 1 omega subunit. When a sigma factor is associated with the core the holoenzyme is formed, which can initiate transcription.

It catalyses the reaction RNA(n) + a ribonucleoside 5'-triphosphate = RNA(n+1) + diphosphate. In terms of biological role, promotes RNA polymerase assembly. Latches the N- and C-terminal regions of the beta' subunit thereby facilitating its interaction with the beta and alpha subunits. The sequence is that of DNA-directed RNA polymerase subunit omega from Clostridium acetobutylicum (strain ATCC 824 / DSM 792 / JCM 1419 / IAM 19013 / LMG 5710 / NBRC 13948 / NRRL B-527 / VKM B-1787 / 2291 / W).